The following is a 184-amino-acid chain: Muscle-specific protein 20 (184 aa).

The Calponin-homology (CH) domain maps to 17–122 (PEMDKEAQEW…NTIFALGRAT (106 aa)). The stretch at 157 to 181 (VGLQAGSNKGATQAGQNLGAGRKIL) is one Calponin-like repeat.

This sequence belongs to the calponin family. As to expression, found in synchronous muscle; not found in asynchronous indirect flight muscle.

This chain is Muscle-specific protein 20 (Mp20), found in Drosophila melanogaster (Fruit fly).